Reading from the N-terminus, the 186-residue chain is Ribosome-recycling factor (186 aa).

This sequence belongs to the RRF family.

The protein localises to the cytoplasm. Responsible for the release of ribosomes from messenger RNA at the termination of protein biosynthesis. May increase the efficiency of translation by recycling ribosomes from one round of translation to another. The chain is Ribosome-recycling factor from Rickettsia massiliae (strain Mtu5).